The sequence spans 88 residues: Small ribosomal subunit protein uS19 (88 aa).

This sequence belongs to the universal ribosomal protein uS19 family.

Protein S19 forms a complex with S13 that binds strongly to the 16S ribosomal RNA. This is Small ribosomal subunit protein uS19 (rpsS) from Chlamydia muridarum (strain MoPn / Nigg).